Consider the following 300-residue polypeptide: 33 kDa chaperonin (300 aa).

Intrachain disulfides connect C247–C249 and C280–C283.

This sequence belongs to the HSP33 family. In terms of processing, under oxidizing conditions two disulfide bonds are formed involving the reactive cysteines. Under reducing conditions zinc is bound to the reactive cysteines and the protein is inactive.

Its subcellular location is the cytoplasm. In terms of biological role, redox regulated molecular chaperone. Protects both thermally unfolding and oxidatively damaged proteins from irreversible aggregation. Plays an important role in the bacterial defense system toward oxidative stress. The sequence is that of 33 kDa chaperonin from Prochlorococcus marinus subsp. pastoris (strain CCMP1986 / NIES-2087 / MED4).